The primary structure comprises 312 residues: Pyridoxal kinase (312 aa).

Met-1 carries the N-acetylmethionine modification. Pyridoxal contacts are provided by Ser-12 and Thr-47. Position 47 (Thr-47) interacts with pyridoxal 5'-phosphate. Ser-59 carries the phosphoserine modification. Asp-113 contacts ATP. Position 113 (Asp-113) interacts with Na(+). Asp-118 contacts Mg(2+). Residue Thr-148 coordinates Na(+). Residues 150–153 (NQFE) and 186–187 (TS) each bind ATP. Thr-186 contributes to the Na(+) binding site. Phosphoserine is present on Ser-213. Residues 226-228 (VDA) and Thr-233 each bind ATP. 234–235 (GD) provides a ligand contact to pyridoxal 5'-phosphate. Asp-235 serves as the catalytic Proton acceptor. Phosphoserine is present on Ser-285.

Belongs to the pyridoxine kinase family. As to quaternary structure, homodimer. The cofactor is Zn(2+). Requires Mg(2+) as cofactor.

The protein localises to the cytoplasm. The protein resides in the cytosol. The catalysed reaction is pyridoxal + ATP = pyridoxal 5'-phosphate + ADP + H(+). It carries out the reaction pyridoxamine + ATP = pyridoxamine 5'-phosphate + ADP + H(+). It catalyses the reaction pyridoxine + ATP = pyridoxine 5'-phosphate + ADP + H(+). It functions in the pathway cofactor metabolism; pyridoxal 5'-phosphate salvage; pyridoxal 5'-phosphate from pyridoxal: step 1/1. The protein operates within cofactor metabolism; pyridoxal 5'-phosphate salvage; pyridoxine 5'-phosphate from pyridoxine: step 1/1. It participates in cofactor metabolism; pyridoxal 5'-phosphate salvage; pyridoxamine 5'-phosphate from pyridoxamine: step 1/1. Its activity is regulated as follows. Activity is increased in the presence of K(+)or Na(+). Functionally, catalyzes the phosphorylation of the dietary vitamin B6 vitamers pyridoxal (PL), pyridoxine (PN) and pyridoxamine (PM) to form pyridoxal 5'-phosphate (PLP), pyridoxine 5'-phosphate (PNP) and pyridoxamine 5'-phosphate (PMP), respectively. PLP is the active form of vitamin B6, and acts as a cofactor for over 140 different enzymatic reactions. The protein is Pyridoxal kinase (PDXK) of Bos taurus (Bovine).